A 407-amino-acid chain; its full sequence is Flagellar calcium-binding protein TB-44A (407 aa).

Residues 1–27 (MGCSASKDTTNSKDGAASKGGKDGKTT) form a disordered region. A 2 X 186 AA almost perfect repeats region spans residues 25-399 (KTTADRKVAW…LQVCGDPDGE (375 aa)). The EF-hand 1 domain occupies 48-83 (ESKSRRIELFKRFDTNGTGKLSFREVLDGCYSILKL). Aspartate 61, asparagine 63, threonine 65, lysine 67, and glutamate 72 together coordinate Ca(2+). The ancestral calcium site 2 stretch occupies residues 110–121 (GVGEEDLVEFLE). EF-hand domains lie at 130-165 (YDIF…WKEW), 167-202 (VDIT…KKLQ), and 237-272 (ESKS…ILKL). Ca(2+) contacts are provided by aspartate 143, aspartate 145, serine 147, glutamate 154, aspartate 180, asparagine 182, serine 184, glutamate 191, aspartate 250, asparagine 252, threonine 254, lysine 256, and glutamate 261. The ancestral calcium site 6 stretch occupies residues 299 to 310 (GVGEEDLVEFLE). 2 EF-hand domains span residues 319–354 (YDIF…WKEW) and 356–391 (VDIT…KKLQ). Ca(2+) is bound by residues aspartate 332, aspartate 334, serine 336, glutamate 343, aspartate 369, asparagine 371, serine 373, and glutamate 380.

It belongs to the calflagin family.

Its subcellular location is the cell projection. The protein resides in the cilium. It is found in the flagellum. Its function is as follows. May contribute to the rapid motility of the trypanosomes, playing a role either in flagellar structure or in calcium metabolism. Could alternate between a GDP-bound inactive form to a calcium/GTP-bound active form. This is Flagellar calcium-binding protein TB-44A from Trypanosoma brucei brucei.